A 1448-amino-acid polypeptide reads, in one-letter code: Probable serine/threonine-protein kinase irlB (1448 aa).

Residues 412-423 (DDDDYDDYDDDD) are compositionally biased toward acidic residues. The interval 412-446 (DDDDYDDYDDDDDHHSGCNNNNNNNNDGDHNEDEN) is disordered. A compositionally biased stretch (low complexity) spans 428-437 (GCNNNNNNNN). 3 coiled-coil regions span residues 666-817 (AESE…EIQN), 887-921 (EIQL…SNMK), and 974-1016 (ENNK…QDED). The segment at 975–1008 (NNKKQNLINDNNNNNNNNNNNNNNNNNNNNNNKL) is disordered. Low complexity predominate over residues 978-1008 (KQNLINDNNNNNNNNNNNNNNNNNNNNNNKL). The region spanning 1027–1293 (RNESNILGRG…IQNVLNHPLF (267 aa)) is the Protein kinase domain. ATP-binding positions include 1033–1041 (LGRGSNGTL) and Lys1056. Catalysis depends on Asp1151, which acts as the Proton acceptor. The KEN domain maps to 1296–1448 (LEKKIQFIDA…TIDYLFNFYN (153 aa)).

The protein belongs to the protein kinase superfamily. Ser/Thr protein kinase family.

The enzyme catalyses L-seryl-[protein] + ATP = O-phospho-L-seryl-[protein] + ADP + H(+). The catalysed reaction is L-threonyl-[protein] + ATP = O-phospho-L-threonyl-[protein] + ADP + H(+). The polypeptide is Probable serine/threonine-protein kinase irlB (irlB-1) (Dictyostelium discoideum (Social amoeba)).